We begin with the raw amino-acid sequence, 445 residues long: Maltoporin (445 aa).

Residues 1–24 (MITLRKLPLAVAVAAGVMSAQAMA) form the signal peptide.

The protein belongs to the porin LamB (TC 1.B.3) family. In terms of assembly, homotrimer formed of three 18-stranded antiparallel beta-barrels, containing three independent channels.

The protein resides in the cell outer membrane. It catalyses the reaction beta-maltose(in) = beta-maltose(out). In terms of biological role, involved in the transport of maltose and maltodextrins. In Shigella flexneri, this protein is Maltoporin.